Here is a 344-residue protein sequence, read N- to C-terminus: Phosphate acyltransferase (344 aa).

Belongs to the PlsX family. In terms of assembly, homodimer. Probably interacts with PlsY.

It localises to the cytoplasm. The enzyme catalyses a fatty acyl-[ACP] + phosphate = an acyl phosphate + holo-[ACP]. It functions in the pathway lipid metabolism; phospholipid metabolism. Functionally, catalyzes the reversible formation of acyl-phosphate (acyl-PO(4)) from acyl-[acyl-carrier-protein] (acyl-ACP). This enzyme utilizes acyl-ACP as fatty acyl donor, but not acyl-CoA. In Sodalis glossinidius (strain morsitans), this protein is Phosphate acyltransferase.